A 405-amino-acid polypeptide reads, in one-letter code: Argininosuccinate synthase (405 aa).

Residues 10–18 (AYSGGLDTS) and Ala-37 contribute to the ATP site. The L-citrulline site is built by Tyr-88 and Ser-93. Gly-118 is an ATP binding site. L-aspartate is bound by residues Thr-120, Asn-124, and Asp-125. Asn-124 contacts L-citrulline. The L-citrulline site is built by Arg-128, Ser-179, Ser-188, Glu-264, and Tyr-276.

It belongs to the argininosuccinate synthase family. Type 1 subfamily. In terms of assembly, homotetramer.

The protein resides in the cytoplasm. The enzyme catalyses L-citrulline + L-aspartate + ATP = 2-(N(omega)-L-arginino)succinate + AMP + diphosphate + H(+). It functions in the pathway amino-acid biosynthesis; L-arginine biosynthesis; L-arginine from L-ornithine and carbamoyl phosphate: step 2/3. The protein is Argininosuccinate synthase of Pseudomonas fluorescens (strain SBW25).